The chain runs to 385 residues: Period circadian protein (385 aa).

Disordered regions lie at residues 28–121, 169–189, and 322–351; these read TAPV…VPPV, GPGP…WEGE, and SPAS…TSQG. Positions 71–93 are enriched in low complexity; that stretch reads SGNFTTGSNLHMSSVTNTSNAGT. Positions 94–115 are enriched in gly residues; it reads GTSGTGNSGDGGGGGAGDGPGS. Over residues 340-351 the composition is skewed to polar residues; the sequence is HPSSEQPSTSQG.

As to quaternary structure, forms a heterodimer with timeless (TIM); the complex then translocates into the nucleus. In terms of processing, phosphorylated with a circadian rhythmicity, probably by the double-time protein (dbt). Phosphorylation could be implicated in the stability of per monomer and in the formation of heterodimer per-tim.

Its subcellular location is the nucleus. The protein resides in the cytoplasm. It is found in the perinuclear region. In terms of biological role, essential for biological clock functions. Determines the period length of circadian and ultradian rhythms; an increase in PER dosage leads to shortened circadian rhythms and a decrease leads to lengthened circadian rhythms. Essential for the circadian rhythmicity of locomotor activity, eclosion behavior, and for the rhythmic component of the male courtship song that originates in the thoracic nervous system. The biological cycle depends on the rhythmic formation and nuclear localization of the TIM-PER complex. Light induces the degradation of TIM, which promotes elimination of PER. Nuclear activity of the heterodimer coordinatively regulates PER and TIM transcription through a negative feedback loop. Behaves as a negative element in circadian transcriptional loop. Does not appear to bind DNA, suggesting indirect transcriptional inhibition. This is Period circadian protein (per) from Drosophila nebulosa (Fruit fly).